Consider the following 864-residue polypeptide: DNA mismatch repair protein MutS (864 aa).

621–628 (GPNMGGKS) contributes to the ATP binding site. Residues 804–833 (ETGKPESPAPVASRSSKPSMQADMFAEPQP) are disordered.

The protein belongs to the DNA mismatch repair MutS family.

Functionally, this protein is involved in the repair of mismatches in DNA. It is possible that it carries out the mismatch recognition step. This protein has a weak ATPase activity. This is DNA mismatch repair protein MutS from Teredinibacter turnerae (strain ATCC 39867 / T7901).